Reading from the N-terminus, the 552-residue chain is Phosphoglucomutase (552 aa).

Residue S135 is the Phosphoserine intermediate of the active site. S135, D289, D291, and D293 together coordinate Mg(2+).

The protein belongs to the phosphohexose mutase family. It depends on Mg(2+) as a cofactor.

It catalyses the reaction alpha-D-glucose 1-phosphate = alpha-D-glucose 6-phosphate. It participates in glycolipid metabolism; diglucosyl-diacylglycerol biosynthesis. In terms of biological role, catalyzes the interconversion between glucose-6-phosphate and alpha-glucose-1-phosphate. This is the first step in the biosynthesis of diglucosyl-diacylglycerol (Glc2-DAG), i.e. a glycolipid found in the membrane, which is also used as a membrane anchor for lipoteichoic acid (LTA). In Staphylococcus saprophyticus subsp. saprophyticus (strain ATCC 15305 / DSM 20229 / NCIMB 8711 / NCTC 7292 / S-41), this protein is Phosphoglucomutase (pgcA).